The following is a 134-amino-acid chain: Replication enhancer protein (134 aa).

This sequence belongs to the geminiviridae replication enhancer protein family. In terms of assembly, homooligomer. Interacts with the replication-associated protein (REP). Interacts with host proliferating cell nuclear antigen (PCNA). Interacts with host retinoblastoma-related protein 1 (RBR1), and may thereby deregulate the host cell cycle. Oligomerization and interaction with PCNA are necessary for optimal replication enhancement.

Increases viral DNA accumulation. Enhances infectivity and symptom expression. The protein is Replication enhancer protein of Tomato yellow leaf curl Sardinia virus (TYLCSV).